Reading from the N-terminus, the 1157-residue chain is ATP-dependent helicase/deoxyribonuclease subunit B (1157 aa).

The UvrD-like helicase ATP-binding domain occupies 1-278 (MTLQIIAGRS…FFLENKRAKT (278 aa)). 8–15 (GRSGTGKT) contributes to the ATP binding site. One can recognise a UvrD-like helicase C-terminal domain in the interval 272–590 (ENKRAKTESL…VLSDMENAKL (319 aa)). Cysteine 794, cysteine 1115, cysteine 1118, and cysteine 1124 together coordinate [4Fe-4S] cluster.

The protein belongs to the helicase family. AddB/RexB type 1 subfamily. Heterodimer of AddA and AddB. It depends on Mg(2+) as a cofactor. [4Fe-4S] cluster serves as cofactor.

Its function is as follows. The heterodimer acts as both an ATP-dependent DNA helicase and an ATP-dependent, dual-direction single-stranded exonuclease. Recognizes the chi site generating a DNA molecule suitable for the initiation of homologous recombination. The AddB subunit has 5' -&gt; 3' nuclease activity but not helicase activity. This is ATP-dependent helicase/deoxyribonuclease subunit B from Listeria monocytogenes serotype 4a (strain HCC23).